The primary structure comprises 390 residues: MGTVEKSSNNDASVTDDIRSAEYYHGMVPRQDAEGFLKREGDFLVRKTEQMPGKVVLAMSVRVTDELCRHFMLNMDPTSNKFYFEHTHQESTISELINWHMTTKTPISAASGAKIRRPMERSPWLINHDSIVANKKLGEGAFGDVFIAELDQGGKQEVAVKTMRAEATREARLRFMKEARLMRKYQHKHVVKLIGVAIHEHPLMIVMEYCPNGSLLSHLKKNKVSLIEKLRFTTEAADGIAYLERSKCIHRDIAARNCLLSAKNELKISDFGMSDNKDEIKDETLEKVPIKWLAPETMQEKVYTHKTDIWTFGVLVWEIYSDGAEPYPGLTKIQTRAKIVVNDYRMKMPDGTHPTVADVVTGTCWQKNPEKRSTMDSIHKKLREFYESKK.

The region spanning 23–119 (YYHGMVPRQD…ASGAKIRRPM (97 aa)) is the SH2 domain. A Protein kinase domain is found at 131-386 (IVANKKLGEG…SIHKKLREFY (256 aa)). Residues 137–145 (LGEGAFGDV) and Lys161 contribute to the ATP site. Asp252 acts as the Proton acceptor in catalysis.

The protein belongs to the protein kinase superfamily. Tyr protein kinase family. Fes/fps subfamily. Interacts with hmp-2. Requires Mn(2+) as cofactor.

It is found in the nucleus. Its subcellular location is the cytoplasm. The protein resides in the cell junction. It localises to the cell membrane. The enzyme catalyses L-tyrosyl-[protein] + ATP = O-phospho-L-tyrosyl-[protein] + ADP + H(+). Non-receptor tyrosine-protein kinase which plays a role in morphogenesis by regulating the epidermal enclosure of the embryo, independently of its kinase activity. Prevents hyperactivation of the Wnt signaling pathway during endoderm development, probably by preventing hmp-2 nuclear translocation. The chain is Fer-related kinase 1 from Caenorhabditis elegans.